A 334-amino-acid chain; its full sequence is S-adenosylmethionine decarboxylase proenzyme (334 aa).

Phe7 provides a ligand contact to substrate. Catalysis depends on residues Glu8 and Glu11. Position 67 (Glu67) interacts with substrate. Residue Ser68 is the Schiff-base intermediate with substrate; via pyruvic acid of the active site. Pyruvic acid (Ser); by autocatalysis is present on Ser68. Residue Cys82 is the Proton donor; for catalytic activity of the active site. Phe223 lines the substrate pocket. Active-site proton acceptor; for processing activity residues include Ser229 and His243. A substrate-binding site is contributed by Glu247. Phosphoserine is present on Ser298.

It belongs to the eukaryotic AdoMetDC family. In terms of assembly, heterotetramer of two alpha and two beta chains. Pyruvate serves as cofactor. Post-translationally, is synthesized initially as an inactive proenzyme. Formation of the active enzyme involves a self-maturation process in which the active site pyruvoyl group is generated from an internal serine residue via an autocatalytic post-translational modification. Two non-identical subunits are generated from the proenzyme in this reaction, and the pyruvate is formed at the N-terminus of the alpha chain, which is derived from the carboxyl end of the proenzyme. The post-translation cleavage follows an unusual pathway, termed non-hydrolytic serinolysis, in which the side chain hydroxyl group of the serine supplies its oxygen atom to form the C-terminus of the beta chain, while the remainder of the serine residue undergoes an oxidative deamination to produce ammonia and the pyruvoyl group blocking the N-terminus of the alpha chain.

It carries out the reaction S-adenosyl-L-methionine + H(+) = S-adenosyl 3-(methylsulfanyl)propylamine + CO2. It participates in amine and polyamine biosynthesis; S-adenosylmethioninamine biosynthesis; S-adenosylmethioninamine from S-adenosyl-L-methionine: step 1/1. Its function is as follows. Essential for biosynthesis of the polyamines spermidine and spermine. Promotes maintenance and self-renewal of embryonic stem cells, by maintaining spermine levels. The sequence is that of S-adenosylmethionine decarboxylase proenzyme (AMD1) from Bos taurus (Bovine).